The sequence spans 26 residues: M-poneritoxin-Ng1d (26 aa).

Expressed by the venom gland.

It is found in the secreted. The protein localises to the target cell membrane. Functionally, has a broad spectrum of activity against both Gram-positive and Gram-negative bacteria and S.cerevisiae. Has insecticidal and hemolytic activities. May act by disrupting the integrity of the bacterial cell membrane. The protein is M-poneritoxin-Ng1d of Neoponera goeldii (Ponerine ant).